Reading from the N-terminus, the 471-residue chain is Light-independent protochlorophyllide reductase subunit N (471 aa).

Residues Cys22, Cys47, and Cys107 each contribute to the [4Fe-4S] cluster site.

The protein belongs to the BchN/ChlN family. As to quaternary structure, protochlorophyllide reductase is composed of three subunits; ChlL, ChlN and ChlB. Forms a heterotetramer of two ChlB and two ChlN subunits. It depends on [4Fe-4S] cluster as a cofactor.

It is found in the plastid. Its subcellular location is the chloroplast. It catalyses the reaction chlorophyllide a + oxidized 2[4Fe-4S]-[ferredoxin] + 2 ADP + 2 phosphate = protochlorophyllide a + reduced 2[4Fe-4S]-[ferredoxin] + 2 ATP + 2 H2O. Its pathway is porphyrin-containing compound metabolism; chlorophyll biosynthesis (light-independent). Component of the dark-operative protochlorophyllide reductase (DPOR) that uses Mg-ATP and reduced ferredoxin to reduce ring D of protochlorophyllide (Pchlide) to form chlorophyllide a (Chlide). This reaction is light-independent. The NB-protein (ChlN-ChlB) is the catalytic component of the complex. This chain is Light-independent protochlorophyllide reductase subunit N, found in Anthoceros angustus (Hornwort).